We begin with the raw amino-acid sequence, 61 residues long: Alpha-conotoxine-like Am1.4 (61 aa).

An N-terminal signal peptide occupies residues 1–21 (MGMRMMFTVFLLVVLATTVVS). Positions 22–44 (FMSGRASHGRNAAASDLIALTIK) are excised as a propeptide.

It belongs to the conotoxin A superfamily. In terms of processing, is not hydroxylated. Contains 2 disulfide bonds. Expressed by the venom duct.

Its subcellular location is the secreted. Functionally, alpha-conotoxins act on postsynaptic membranes, they bind to the nicotinic acetylcholine receptors (nAChR) and thus inhibit them. This chain is Alpha-conotoxine-like Am1.4, found in Conus amadis (Amadis cone).